A 488-amino-acid polypeptide reads, in one-letter code: Fumarate hydratase (488 aa).

The (S)-malate site is built by Ser-105, Ser-147, Asn-148, Thr-194, and His-195. His-195 acts as the Proton donor/acceptor in catalysis. Residue Ser-340 is part of the active site. The (S)-malate site is built by Ser-341, Lys-346, and Asn-348.

This sequence belongs to the class-II fumarase/aspartase family. Fumarase subfamily. As to quaternary structure, homotetramer.

The protein localises to the cytoplasm. The protein resides in the cytosol. The catalysed reaction is (S)-malate = fumarate + H2O. Functionally, catalyzes the reversible stereospecific interconversion of fumarate to L-malate. Fumarate metabolism in the cytosol plays a role during urea cycle and arginine metabolism; fumarate being a by-product of the urea cycle and amino-acid catabolism. The chain is Fumarate hydratase from Schistosoma mansoni (Blood fluke).